Here is a 220-residue protein sequence, read N- to C-terminus: Redox-sensing transcriptional repressor Rex (220 aa).

Residues 25 to 64 (WYLSNVKLLKQKGERYVSSTQISKEINIDASQIAKDLSYV) constitute a DNA-binding region (H-T-H motif). Position 99-104 (99-104 (GVGSLG)) interacts with NAD(+).

This sequence belongs to the transcriptional regulatory Rex family. In terms of assembly, homodimer.

Its subcellular location is the cytoplasm. Modulates transcription in response to changes in cellular NADH/NAD(+) redox state. In Bacteroides fragilis (strain ATCC 25285 / DSM 2151 / CCUG 4856 / JCM 11019 / LMG 10263 / NCTC 9343 / Onslow / VPI 2553 / EN-2), this protein is Redox-sensing transcriptional repressor Rex.